A 163-amino-acid chain; its full sequence is GTP-dependent dephospho-CoA kinase (163 aa).

GTP contacts are provided by Asp-38, Val-39, Asp-57, Glu-115, and Asp-138.

The protein belongs to the GTP-dependent DPCK family.

It catalyses the reaction 3'-dephospho-CoA + GTP = GDP + CoA + H(+). The protein operates within cofactor biosynthesis; coenzyme A biosynthesis. In terms of biological role, catalyzes the GTP-dependent phosphorylation of the 3'-hydroxyl group of dephosphocoenzyme A to form coenzyme A (CoA). This is GTP-dependent dephospho-CoA kinase from Methanothermobacter thermautotrophicus (strain ATCC 29096 / DSM 1053 / JCM 10044 / NBRC 100330 / Delta H) (Methanobacterium thermoautotrophicum).